Consider the following 124-residue polypeptide: Ribosome-binding factor A (124 aa).

This sequence belongs to the RbfA family. Monomer. Binds 30S ribosomal subunits, but not 50S ribosomal subunits or 70S ribosomes.

It is found in the cytoplasm. Its function is as follows. One of several proteins that assist in the late maturation steps of the functional core of the 30S ribosomal subunit. Associates with free 30S ribosomal subunits (but not with 30S subunits that are part of 70S ribosomes or polysomes). Required for efficient processing of 16S rRNA. May interact with the 5'-terminal helix region of 16S rRNA. This Sorangium cellulosum (strain So ce56) (Polyangium cellulosum (strain So ce56)) protein is Ribosome-binding factor A.